The sequence spans 1184 residues: Calcium-activated potassium channel subunit alpha-1a (1184 aa).

At 1 to 39 the chain is on the extracellular side; it reads MSNNINFNKNPDSSVSISKMDVIIPFTPDVPCDNNGQRM. The chain crosses the membrane as a helical span at residues 40–60; sequence WWAFLASSMVTFFGGLFIILL. At 61–132 the chain is on the cytoplasmic side; that stretch reads WRTLKYLWTV…MISAQTLTGR (72 aa). Residues cysteine 71, cysteine 72, and cysteine 74 are each lipidated (S-palmitoyl cysteine). A helical membrane pass occupies residues 133 to 153; that stretch reads VLVVLVFALSIGALGIYFIDS. Residues 154-168 are Extracellular-facing; that stretch reads SDPIESCQNFYKDFT. The helical transmembrane segment at 169 to 189 threads the bilayer; it reads LQIDMAFNVFFLLYFGLRFIA. The Cytoplasmic portion of the chain corresponds to 190-193; the sequence is ANDK. The chain crosses the membrane as a helical span at residues 194 to 214; that stretch reads LWFWLEVNSVVDFFTVPPVFV. Topologically, residues 215-254 are extracellular; it reads SVYLNRSWLGLRFLRALRLIQFSEILQFLNILKTSNSIKL. A helical membrane pass occupies residues 255 to 275; that stretch reads VNLCSIFISTWLTAAGFIHLV. Residues 276–289 lie on the Cytoplasmic side of the membrane; that stretch reads ENSGDPWENFQNSQ. Residues 290–310 form a helical membrane-spanning segment; that stretch reads PLSYWECVYLLMVTMSTVGYG. At 311–321 the chain is on the extracellular side; it reads DVYARTTLGRL. Residues 322-342 form a helical membrane-spanning segment; it reads FMVFFILGGLAMFASYVPEII. Over 343 to 1184 the chain is Cytoplasmic; the sequence is ELIGNRKKYG…PPIREVEDEC (842 aa). In terms of domain architecture, RCK N-terminal 1 spans 361–503; it reads RKHIVVCGHI…WNWKEGDDAI (143 aa). Residues glutamate 393, glutamine 416, and glutamate 418 each coordinate Mg(2+). Asparagine 468 contributes to the Ca(2+) binding site. Residues 655–677 form a disordered region; the sequence is EHPSTLSPKKKQRNGGMRNSPNC. Threonine 659 is subject to Phosphothreonine. Phosphoserine is present on residues serine 661, serine 674, and serine 678. In terms of domain architecture, RCK N-terminal 2 spans 735–879; sequence SGHVVVCIFG…MDRSSPDNSP (145 aa). At threonine 866 the chain carries Phosphothreonine. Phosphoserine is present on residues serine 874 and serine 878. 4 residues coordinate Ca(2+): glutamine 908, aspartate 911, aspartate 914, and aspartate 916. The Calcium bowl motif lies at 908 to 916; it reads QFLDQDDDD. A disordered region spans residues 1082–1143; the sequence is RASLSHSSHS…PEKRWFTDEA (62 aa). Residues 1084–1104 show a composition bias toward low complexity; it reads SLSHSSHSSHSSSKKSSSVHS. The segment covering 1116 to 1125 has biased composition (basic and acidic residues); sequence KAREARDKQN.

The protein belongs to the potassium channel family. Calcium-activated (TC 1.A.1.3) subfamily. KCa1.1/KCNMA1 sub-subfamily. Homotetramer; which constitutes the calcium-activated potassium channel. Phosphorylated. In terms of processing, palmitoylated.

It localises to the cell membrane. The enzyme catalyses K(+)(in) = K(+)(out). Its function is as follows. Potassium channel activated by both membrane depolarization or increase in cytosolic Ca(2+) that mediates export of K(+). It is also activated by the concentration of cytosolic Mg(2+). Its activation dampens the excitatory events that elevate the cytosolic Ca(2+) concentration and/or depolarize the cell membrane. It therefore contributes to repolarization of the membrane potential. Involved in determining peripheral auditory sensitivity. The chain is Calcium-activated potassium channel subunit alpha-1a from Danio rerio (Zebrafish).